We begin with the raw amino-acid sequence, 117 residues long: Large ribosomal subunit protein bL20 (117 aa).

The protein belongs to the bacterial ribosomal protein bL20 family.

Binds directly to 23S ribosomal RNA and is necessary for the in vitro assembly process of the 50S ribosomal subunit. It is not involved in the protein synthesizing functions of that subunit. The polypeptide is Large ribosomal subunit protein bL20 (Vibrio atlanticus (strain LGP32) (Vibrio splendidus (strain Mel32))).